Here is a 92-residue protein sequence, read N- to C-terminus: MLKEVREGVILRVIVKPNARENSIEGIDEWRGRIKVNIKAQPVKGKANRELIKFLSNLFGAEVEILKGETSREKDVLVRGVNLEEVKRRLKL.

Belongs to the UPF0235 family.

This chain is UPF0235 protein PYRAB05010, found in Pyrococcus abyssi (strain GE5 / Orsay).